The sequence spans 225 residues: MESINYQILKRSEKKLLGLFFDYFQHVIKMHETLNKLLCEADVTKREKLIQAIYEMEDFSNKSEFKLINESIWAISKNSPLTNHLRLTITIIMCSRDLERICDYANNLTKFVKHYQHLDVSIFSKLVNLHKSVLNNLKQTFASLQDKEKPLTIQFENVTKILTEFEQQYRVVLTEYYDKVKDEKLSDRIFLIDLILSVKHIERINDYCYNIIKAFLFVKNPEVFN.

This is an uncharacterized protein from Mycoplasma pneumoniae (strain ATCC 29342 / M129 / Subtype 1) (Mycoplasmoides pneumoniae).